Here is a 349-residue protein sequence, read N- to C-terminus: Xylitol-binding protein (349 aa).

An N-terminal signal peptide occupies residues 1 to 22 (MNITSKIGAIAAAGAVGLGLTA). A lipid anchor (N-palmitoyl cysteine) is attached at cysteine 23. Cysteine 23 carries the S-diacylglycerol cysteine lipid modification. Residues tyrosine 42, asparagine 121, arginine 173, asparagine 224, aspartate 249, and glutamine 269 each contribute to the xylitol site.

Belongs to the bacterial solute-binding protein 2 family.

It localises to the cell membrane. Functionally, part of an ABC transporter complex likely involved in xylitol import. Binds xylitol. The protein is Xylitol-binding protein of Mycolicibacterium smegmatis (strain ATCC 700084 / mc(2)155) (Mycobacterium smegmatis).